Reading from the N-terminus, the 453-residue chain is Bifunctional protein GlmU (453 aa).

The pyrophosphorylase stretch occupies residues 1 to 226 (MSLNVVILAA…AMEVEGANNR (226 aa)). Residues 8-11 (LAAG), lysine 22, glutamine 73, 78-79 (GT), 100-102 (YGD), glycine 137, glutamate 151, asparagine 166, and asparagine 224 each bind UDP-N-acetyl-alpha-D-glucosamine. A Mg(2+)-binding site is contributed by aspartate 102. Asparagine 224 is a binding site for Mg(2+). Residues 227–247 (VQLAQLERSYQKMQAERLMIA) are linker. Residues 248-453 (GATLIDPARF…QNWARPVKKK (206 aa)) are N-acetyltransferase. Arginine 330 and lysine 348 together coordinate UDP-N-acetyl-alpha-D-glucosamine. Histidine 360 functions as the Proton acceptor in the catalytic mechanism. The UDP-N-acetyl-alpha-D-glucosamine site is built by tyrosine 363 and asparagine 374. Residues alanine 377, 383–384 (NY), serine 402, alanine 420, and arginine 437 contribute to the acetyl-CoA site.

The protein in the N-terminal section; belongs to the N-acetylglucosamine-1-phosphate uridyltransferase family. In the C-terminal section; belongs to the transferase hexapeptide repeat family. As to quaternary structure, homotrimer. Mg(2+) serves as cofactor.

The protein localises to the cytoplasm. The enzyme catalyses alpha-D-glucosamine 1-phosphate + acetyl-CoA = N-acetyl-alpha-D-glucosamine 1-phosphate + CoA + H(+). The catalysed reaction is N-acetyl-alpha-D-glucosamine 1-phosphate + UTP + H(+) = UDP-N-acetyl-alpha-D-glucosamine + diphosphate. The protein operates within nucleotide-sugar biosynthesis; UDP-N-acetyl-alpha-D-glucosamine biosynthesis; N-acetyl-alpha-D-glucosamine 1-phosphate from alpha-D-glucosamine 6-phosphate (route II): step 2/2. It functions in the pathway nucleotide-sugar biosynthesis; UDP-N-acetyl-alpha-D-glucosamine biosynthesis; UDP-N-acetyl-alpha-D-glucosamine from N-acetyl-alpha-D-glucosamine 1-phosphate: step 1/1. Its pathway is bacterial outer membrane biogenesis; LPS lipid A biosynthesis. Its function is as follows. Catalyzes the last two sequential reactions in the de novo biosynthetic pathway for UDP-N-acetylglucosamine (UDP-GlcNAc). The C-terminal domain catalyzes the transfer of acetyl group from acetyl coenzyme A to glucosamine-1-phosphate (GlcN-1-P) to produce N-acetylglucosamine-1-phosphate (GlcNAc-1-P), which is converted into UDP-GlcNAc by the transfer of uridine 5-monophosphate (from uridine 5-triphosphate), a reaction catalyzed by the N-terminal domain. The chain is Bifunctional protein GlmU from Aeromonas hydrophila subsp. hydrophila (strain ATCC 7966 / DSM 30187 / BCRC 13018 / CCUG 14551 / JCM 1027 / KCTC 2358 / NCIMB 9240 / NCTC 8049).